Consider the following 917-residue polypeptide: Low-density lipoprotein receptor-related protein 8 (917 aa).

The first 24 residues, Met-1 to Gly-24, serve as a signal peptide directing secretion. Topologically, residues Ala-25–Ala-838 are extracellular. LDL-receptor class A domains are found at residues Glu-28–Pro-64, Thr-67–Thr-105, Val-108–Ala-146, Ala-148–Ser-184, and Thr-187–Gly-225. 29 cysteine pairs are disulfide-bonded: Cys-29/Cys-41, Cys-36/Cys-54, Cys-48/Cys-63, Cys-68/Cys-80, Cys-75/Cys-93, Cys-87/Cys-104, Cys-109/Cys-123, Cys-116/Cys-136, Cys-130/Cys-145, Cys-149/Cys-161, Cys-156/Cys-174, Cys-168/Cys-183, Cys-188/Cys-200, Cys-195/Cys-213, Cys-207/Cys-224, Cys-241/Cys-259, Cys-253/Cys-268, Cys-273/Cys-285, Cys-280/Cys-298, Cys-292/Cys-307, Cys-313/Cys-326, Cys-321/Cys-339, Cys-333/Cys-350, Cys-355/Cys-366, Cys-362/Cys-375, Cys-377/Cys-389, Cys-395/Cys-405, Cys-401/Cys-414, and Cys-416/Cys-429. Residues Trp-46, Asp-49, Asp-51, Asp-53, Asp-59, and Glu-60 each contribute to the Ca(2+) site. Asn-158 carries N-linked (GlcNAc...) asparagine glycosylation. N-linked (GlcNAc...) asparagine glycosylation occurs at Asn-196. LDL-receptor class A domains are found at residues Thr-272–Val-308 and Ala-312–Gly-351. An EGF-like 1 domain is found at Pro-346–Gly-390. One can recognise an EGF-like 2; calcium-binding domain in the interval Asp-391–Lys-430. LDL-receptor class B repeat units follow at residues Asn-476–His-522, Lys-523–Arg-565, Arg-566–Asn-609, Gln-610–Glu-652, and Asp-653–Leu-695. Asn-532 is a glycosylation site (N-linked (GlcNAc...) asparagine). Asn-628 carries an N-linked (GlcNAc...) asparagine glycan. The interval Thr-754–Glu-813 is clustered O-linked oligosaccharides. N-linked (GlcNAc...) asparagine glycosylation is found at Asn-782 and Asn-820. The helical transmembrane segment at Ala-839 to Trp-861 threads the bilayer. Over Arg-862–Pro-917 the chain is Cytoplasmic.

This sequence belongs to the LDLR family. As to quaternary structure, homooligomer. Mainly in brain.

The protein resides in the cell membrane. Cell surface receptor for Reelin (RELN) and apolipoprotein E (apoE)-containing ligands. Also binds alpha2-macroglobulin. LRP8 participates in transmitting the extracellular Reelin signal to intracellular signaling processes, by binding to DAB1 on its cytoplasmic tail. Reelin acts via both the VLDL receptor (VLDLR) and LRP8 to regulate DAB1 tyrosine phosphorylation and microtubule function in neurons. LRP8 has higher affinity for Reelin than VLDLR. LRP8 is thus a key component of the Reelin pathway which governs neuronal layering of the forebrain during embryonic brain development. Not required for endocytic uptake of SEPP1 in the kidney which is mediated by LRP2. The sequence is that of Low-density lipoprotein receptor-related protein 8 (LRP8) from Gallus gallus (Chicken).